The chain runs to 318 residues: Glutathione synthetase (318 aa).

The ATP-grasp domain maps to K129–E314. Residue H155–G211 participates in ATP binding. Mg(2+) contacts are provided by E285 and N287.

This sequence belongs to the prokaryotic GSH synthase family. Requires Mg(2+) as cofactor. It depends on Mn(2+) as a cofactor.

It catalyses the reaction gamma-L-glutamyl-L-cysteine + glycine + ATP = glutathione + ADP + phosphate + H(+). Its pathway is sulfur metabolism; glutathione biosynthesis; glutathione from L-cysteine and L-glutamate: step 2/2. The chain is Glutathione synthetase from Bordetella pertussis (strain Tohama I / ATCC BAA-589 / NCTC 13251).